The sequence spans 184 residues: UPF0398 protein BCAH820_1652 (184 aa).

It belongs to the UPF0398 family.

This is UPF0398 protein BCAH820_1652 from Bacillus cereus (strain AH820).